Consider the following 567-residue polypeptide: 2-succinyl-5-enolpyruvyl-6-hydroxy-3-cyclohexene-1-carboxylate synthase (567 aa).

It belongs to the TPP enzyme family. MenD subfamily. In terms of assembly, homodimer. Mg(2+) serves as cofactor. Mn(2+) is required as a cofactor. Requires thiamine diphosphate as cofactor.

It catalyses the reaction isochorismate + 2-oxoglutarate + H(+) = 5-enolpyruvoyl-6-hydroxy-2-succinyl-cyclohex-3-ene-1-carboxylate + CO2. The protein operates within quinol/quinone metabolism; 1,4-dihydroxy-2-naphthoate biosynthesis; 1,4-dihydroxy-2-naphthoate from chorismate: step 2/7. It functions in the pathway quinol/quinone metabolism; menaquinone biosynthesis. Its function is as follows. Catalyzes the thiamine diphosphate-dependent decarboxylation of 2-oxoglutarate and the subsequent addition of the resulting succinic semialdehyde-thiamine pyrophosphate anion to isochorismate to yield 2-succinyl-5-enolpyruvyl-6-hydroxy-3-cyclohexene-1-carboxylate (SEPHCHC). The polypeptide is 2-succinyl-5-enolpyruvyl-6-hydroxy-3-cyclohexene-1-carboxylate synthase (Yersinia pestis bv. Antiqua (strain Antiqua)).